The sequence spans 272 residues: MDAQSAAKCLTAVRRHSPLVHSITNNVVTNFTANGLLALGASPVMAYAKEEVADMAKIAGALVLNIGTLSKESVEAMIIAGKSANEHGVPVILDPVGAGATPFRTESARDIIREVRLAAIRGNAAEIAHTVGVTDWLIKGVDAGEGGGDIIRLAQQAAQKLNTVIAITGEVDVIADTSHVYTLHNGHKLLTKVTGAGCLLTSVVGAFCAVEENPLFAAIAAISSYGVAAQLAAQQTADKGPGSFQIELLNKLSTVTEQDVQEWATIERVTVS.

Residue Met45 participates in substrate binding. Arg121 and Thr168 together coordinate ATP. Gly195 provides a ligand contact to substrate.

It belongs to the Thz kinase family. As to quaternary structure, homotrimer. The cofactor is Mg(2+).

The enzyme catalyses 5-(2-hydroxyethyl)-4-methylthiazole + ATP = 4-methyl-5-(2-phosphooxyethyl)-thiazole + ADP + H(+). The protein operates within cofactor biosynthesis; thiamine diphosphate biosynthesis; 4-methyl-5-(2-phosphoethyl)-thiazole from 5-(2-hydroxyethyl)-4-methylthiazole: step 1/1. Its function is as follows. Catalyzes the phosphorylation of the hydroxyl group of 4-methyl-5-beta-hydroxyethylthiazole (THZ). The polypeptide is Hydroxyethylthiazole kinase (Bacillus subtilis (strain 168)).